The chain runs to 168 residues: DOMON domain-containing protein Y73F4A.2 (168 aa).

The first 18 residues, M1–A18, serve as a signal peptide directing secretion. Residues S26–G143 enclose the DOMON domain. N36 carries N-linked (GlcNAc...) asparagine glycosylation. The tract at residues G148–N168 is disordered. Residues R152–N168 are compositionally biased toward basic and acidic residues.

It localises to the secreted. The sequence is that of DOMON domain-containing protein Y73F4A.2 from Caenorhabditis elegans.